Consider the following 210-residue polypeptide: Somatotropin-2 (210 aa).

Positions 1–22 (MGQVFLLMPVLLVSCFLGQGAA) are cleaved as a signal peptide. Residue His-38 coordinates Zn(2+). An intrachain disulfide couples Cys-71 to Cys-183. Glu-192 lines the Zn(2+) pocket. The cysteines at positions 200 and 208 are disulfide-linked.

This sequence belongs to the somatotropin/prolactin family.

The protein resides in the secreted. Its function is as follows. Growth hormone plays an important role in growth control and is involved in the regulation of several anabolic processes. Implicated as an osmoregulatory substance important for seawater adaptation. In Oncorhynchus mykiss (Rainbow trout), this protein is Somatotropin-2 (gh2).